The sequence spans 156 residues: U4/U6.U5 small nuclear ribonucleoprotein 27 kDa protein (156 aa).

The interval methionine 1–threonine 98 is disordered. A compositionally biased stretch (basic residues) spans arginine 13–serine 59. The span at arginine 66–threonine 98 shows a compositional bias: basic and acidic residues.

Belongs to the SNUT3 family. Part of a tri-snRNP complex.

Its subcellular location is the nucleus. Its function is as follows. May play a role in mRNA splicing. The sequence is that of U4/U6.U5 small nuclear ribonucleoprotein 27 kDa protein (snrnp27) from Xenopus tropicalis (Western clawed frog).